The sequence spans 123 residues: Phosphoribosyl-AMP cyclohydrolase (123 aa).

D81 contacts Mg(2+). C82 lines the Zn(2+) pocket. 2 residues coordinate Mg(2+): D83 and D85. The Zn(2+) site is built by C98 and C105.

It belongs to the PRA-CH family. In terms of assembly, homodimer. The cofactor is Mg(2+). Zn(2+) is required as a cofactor.

The protein resides in the cytoplasm. The catalysed reaction is 1-(5-phospho-beta-D-ribosyl)-5'-AMP + H2O = 1-(5-phospho-beta-D-ribosyl)-5-[(5-phospho-beta-D-ribosylamino)methylideneamino]imidazole-4-carboxamide. The protein operates within amino-acid biosynthesis; L-histidine biosynthesis; L-histidine from 5-phospho-alpha-D-ribose 1-diphosphate: step 3/9. Catalyzes the hydrolysis of the adenine ring of phosphoribosyl-AMP. This Nocardioides sp. (strain ATCC BAA-499 / JS614) protein is Phosphoribosyl-AMP cyclohydrolase.